We begin with the raw amino-acid sequence, 381 residues long: Subtilisin NAT (381 aa).

The signal sequence occupies residues 1–29 (MRSKKLWISLLFALTLIFTMAFSNMSAQA). Residues 30–106 (AGKSSTEKKY…VEEDHIAHEY (77 aa)) constitute a propeptide that is removed on maturation. Positions 38-103 (KYIVGFKQTM…VAYVEEDHIA (66 aa)) constitute an Inhibitor I9 domain. Residues 111–380 (PYGISQIKAP…KGLINVQAAA (270 aa)) enclose the Peptidase S8 domain. The active-site Charge relay system is the Asp-138. Position 147 (Asp-147) interacts with Ca(2+). His-170 serves as the catalytic Charge relay system. Leu-181, Asn-183, Ile-185, Val-187, Ala-275, Tyr-277, Thr-280, and Asp-303 together coordinate Ca(2+). Ser-327 (charge relay system) is an active-site residue.

This sequence belongs to the peptidase S8 family. As to quaternary structure, monomer. The cofactor is Ca(2+).

The protein localises to the secreted. The catalysed reaction is Hydrolysis of proteins with broad specificity for peptide bonds, and a preference for a large uncharged residue in P1. Hydrolyzes peptide amides.. Its activity is regulated as follows. Inhibited by PMSF (phenylmethylsulfonyl fluoride). Its function is as follows. Subtilisin is an extracellular alkaline serine protease, it catalyzes the hydrolysis of proteins and peptide amides. Subtilisin NAT also has fibrinolytic activity. In Bacillus subtilis subsp. natto, this protein is Subtilisin NAT.